Reading from the N-terminus, the 605-residue chain is Insulin-like growth factor-binding protein complex acid labile subunit (605 aa).

Positions 1–27 are cleaved as a signal peptide; it reads MALRKGGLALALLLLSWVALGPRSLEG. An LRRNT domain is found at 32 to 74; that stretch reads TPGEAEGPACPAACVCSYDDDADELSVFCSSRNLTRLPDGVPG. 2 disulfide bridges follow: Cys-41/Cys-47 and Cys-45/Cys-60. N-linked (GlcNAc...) asparagine glycans are attached at residues Asn-64, Asn-85, and Asn-96. 19 LRR repeats span residues 75–96, 99–120, 123–144, 147–168, 171–192, 195–216, 219–240, 243–264, 267–288, 291–312, 315–336, 339–360, 363–384, 387–408, 411–432, 435–456, 459–480, 483–504, and 507–528; these read GTQALWLDGNNLSSVPPAAFQN, SLGFLNLQGGQLGSLEPQALLG, NLCHLHLERNQLRSLALGTFAH, ALASLGLSNNRLSRLEDGLFEG, SLWDLNLGWNSLAVLPDAAFRG, SLRELVLAGNRLAYLQPALFSG, ELRELDLSRNALRAIKANVFVQ, RLQKLYLDRNLIAAVAPGAFLG, ALRWLDLSHNRVAGLLEDTFPG, GLRVLRLSHNAIASLRPRTFKD, FLEELQLGHNRIRQLAERSFEG, QLEVLTLDHNQLQEVKAGAFLG, NVAVMNLSGNCLRNLPEQVFRG, KLHSLHLEGSCLGRIRPHTFTG, GLRRLFLKDNGLVGIEEQSLWG, ELLELDLTSNQLTHLPHRLFQG, KLEYLLLSRNRLAELPADALGP, RAFWLDVSHNRLEALPNSLLAP, and RLRYLSLRNNSLRTFTPQPPGL. Asn-368 carries an N-linked (GlcNAc...) asparagine glycan. N-linked (GlcNAc...) asparagine glycosylation is present at Asn-515. The LRRCT domain occupies 536 to 605; that stretch reads NPWDCGCPLK…DLSEAHFAPC (70 aa). 3 cysteine pairs are disulfide-bonded: Cys-540–Cys-583, Cys-542–Cys-605, and Cys-566–Cys-571. The N-linked (GlcNAc...) asparagine glycan is linked to Asn-580.

As to quaternary structure, forms a ternary complex with IGF1 and IGFBP3. Plasma.

The protein localises to the secreted. It localises to the extracellular space. In terms of biological role, involved in protein-protein interactions that result in protein complexes, receptor-ligand binding or cell adhesion. The protein is Insulin-like growth factor-binding protein complex acid labile subunit (IGFALS) of Homo sapiens (Human).